Reading from the N-terminus, the 330-residue chain is Putative 1-aminocyclopropane-1-carboxylate deaminase (330 aa).

Lys-54 is subject to N6-(pyridoxal phosphate)lysine.

This sequence belongs to the ACC deaminase/D-cysteine desulfhydrase family. Requires pyridoxal 5'-phosphate as cofactor.

The enzyme catalyses 1-aminocyclopropane-1-carboxylate + H2O = 2-oxobutanoate + NH4(+). The sequence is that of Putative 1-aminocyclopropane-1-carboxylate deaminase from Pyrococcus abyssi (strain GE5 / Orsay).